Reading from the N-terminus, the 268-residue chain is Small ribosomal subunit protein uS2 (268 aa).

Belongs to the universal ribosomal protein uS2 family.

The sequence is that of Small ribosomal subunit protein uS2 from Caulobacter vibrioides (strain ATCC 19089 / CIP 103742 / CB 15) (Caulobacter crescentus).